The chain runs to 83 residues: NAD(P)H-quinone oxidoreductase subunit L (83 aa).

2 helical membrane-spanning segments follow: residues 17 to 37 and 53 to 73; these read VLLA…LALL and TAIY…APFI.

The protein belongs to the complex I NdhL subunit family. NDH-1 can be composed of about 15 different subunits; different subcomplexes with different compositions have been identified which probably have different functions.

It localises to the cellular thylakoid membrane. The catalysed reaction is a plastoquinone + NADH + (n+1) H(+)(in) = a plastoquinol + NAD(+) + n H(+)(out). The enzyme catalyses a plastoquinone + NADPH + (n+1) H(+)(in) = a plastoquinol + NADP(+) + n H(+)(out). Functionally, NDH-1 shuttles electrons from an unknown electron donor, via FMN and iron-sulfur (Fe-S) centers, to quinones in the respiratory and/or the photosynthetic chain. The immediate electron acceptor for the enzyme in this species is believed to be plastoquinone. Couples the redox reaction to proton translocation, and thus conserves the redox energy in a proton gradient. Cyanobacterial NDH-1 also plays a role in inorganic carbon-concentration. The sequence is that of NAD(P)H-quinone oxidoreductase subunit L from Synechococcus sp. (strain RCC307).